The primary structure comprises 55 residues: MAKGARDKIKLESTAGTGHFYTTTKNKRNMPEKMLIKKFDPVVRKHVEYKETKIK.

It belongs to the bacterial ribosomal protein bL33 family.

The chain is Large ribosomal subunit protein bL33 from Paraburkholderia phytofirmans (strain DSM 17436 / LMG 22146 / PsJN) (Burkholderia phytofirmans).